We begin with the raw amino-acid sequence, 508 residues long: tRNA (guanine(37)-N(1))-methyltransferase (508 aa).

Residues Met-1–Ala-53 constitute a mitochondrion transit peptide. S-adenosyl-L-methionine is bound at residue His-253. A compositionally biased stretch (basic and acidic residues) spans Arg-267–Thr-284. The segment at Arg-267–Asp-291 is disordered. Residues Asp-323–Leu-324, Asp-351–Gly-352, and Asn-402 each bind S-adenosyl-L-methionine.

It belongs to the class I-like SAM-binding methyltransferase superfamily. TRM5/TYW2 family. As to quaternary structure, monomer.

It is found in the mitochondrion matrix. The protein resides in the nucleus. The protein localises to the cytoplasm. The catalysed reaction is guanosine(37) in tRNA + S-adenosyl-L-methionine = N(1)-methylguanosine(37) in tRNA + S-adenosyl-L-homocysteine + H(+). Functionally, specifically methylates the N1 position of guanosine-37 in various cytoplasmic and mitochondrial tRNAs. Methylation is not dependent on the nature of the nucleoside 5' of the target nucleoside. This is the first step in the biosynthesis of wybutosine (yW), a modified base adjacent to the anticodon of tRNAs and required for accurate decoding. This is tRNA (guanine(37)-N(1))-methyltransferase from Yarrowia lipolytica (strain CLIB 122 / E 150) (Yeast).